The chain runs to 361 residues: Phenylalanine--tRNA ligase alpha subunit (361 aa).

Residue E260 coordinates Mg(2+).

The protein belongs to the class-II aminoacyl-tRNA synthetase family. Phe-tRNA synthetase alpha subunit type 1 subfamily. As to quaternary structure, tetramer of two alpha and two beta subunits. The cofactor is Mg(2+).

It is found in the cytoplasm. The enzyme catalyses tRNA(Phe) + L-phenylalanine + ATP = L-phenylalanyl-tRNA(Phe) + AMP + diphosphate + H(+). The sequence is that of Phenylalanine--tRNA ligase alpha subunit from Allorhizobium ampelinum (strain ATCC BAA-846 / DSM 112012 / S4) (Agrobacterium vitis (strain S4)).